A 106-amino-acid chain; its full sequence is uncharacterized protein (106 aa).

A helical membrane pass occupies residues 85 to 101; it reads AVALVLLCVSHHLTYLP.

It is found in the membrane. This is an uncharacterized protein from Saccharomyces cerevisiae (strain ATCC 204508 / S288c) (Baker's yeast).